The following is a 165-amino-acid chain: MTTRKPEELEGVTLLGNQGTNYLFDYAPQVLETFPNKHTNRDYFVKFNCPEFTSLCPQTGQPDFATVYISYIPNEIMVESKSLKLYLFSFRNHGDFHEDCMNIIMNDLIELMDPRYIEVWGKFTPRGGISIDPYTNYGKPGTKYEEMASYRMMNHDMYPETIDNR.

Cys56 acts as the Thioimide intermediate in catalysis. Asp63 functions as the Proton donor in the catalytic mechanism. Residues 78 to 80 and 97 to 98 contribute to the substrate site; these read VES and HE.

Belongs to the GTP cyclohydrolase I family. QueF type 1 subfamily.

The protein resides in the cytoplasm. The catalysed reaction is 7-aminomethyl-7-carbaguanine + 2 NADP(+) = 7-cyano-7-deazaguanine + 2 NADPH + 3 H(+). It functions in the pathway tRNA modification; tRNA-queuosine biosynthesis. Catalyzes the NADPH-dependent reduction of 7-cyano-7-deazaguanine (preQ0) to 7-aminomethyl-7-deazaguanine (preQ1). This Bacillus pumilus (strain SAFR-032) protein is NADPH-dependent 7-cyano-7-deazaguanine reductase.